The following is a 402-amino-acid chain: Speedy protein E2 (402 aa).

Residues 1 to 89 (MDRTETRFRK…EEPEKELAPE (89 aa)) are disordered. Over residues 16-39 (GKITTSRQPHPQNEQSPQRSTSGY) the composition is skewed to polar residues. The span at 76-89 (DESEEEPEKELAPE) shows a compositional bias: acidic residues.

Belongs to the Speedy/Ringo family.

The chain is Speedy protein E2 (SPDYE2) from Homo sapiens (Human).